We begin with the raw amino-acid sequence, 138 residues long: Large ribosomal subunit protein mL54 (138 aa).

The N-terminal 14 residues, 1 to 14 (MATKRLFGATRTWA), are a transit peptide targeting the mitochondrion.

This sequence belongs to the mitochondrion-specific ribosomal protein mL54 family. Component of the mitochondrial large ribosomal subunit (mt-LSU). Mature mammalian 55S mitochondrial ribosomes consist of a small (28S) and a large (39S) subunit. The 28S small subunit contains a 12S ribosomal RNA (12S mt-rRNA) and 30 different proteins. The 39S large subunit contains a 16S rRNA (16S mt-rRNA), a copy of mitochondrial valine transfer RNA (mt-tRNA(Val)), which plays an integral structural role, and 52 different proteins.

The protein resides in the mitochondrion. This is Large ribosomal subunit protein mL54 (MRPL54) from Homo sapiens (Human).